Reading from the N-terminus, the 566-residue chain is 15-cis-phytoene desaturase, chloroplastic/chromoplastic (566 aa).

The transit peptide at 1–86 (MVVFGNVSAA…ASLSASFRSA (86 aa)) directs the protein to the chloroplast and chromoplast. FAD is bound by residues Ala-103, 122-123 (EA), Lys-130, 147-148 (HI), and Tyr-153. Substrate is bound at residue Arg-288. FAD is bound by residues Ile-330 and Asp-519. Ala-527 lines the substrate pocket. Met-529 is a binding site for FAD.

The protein belongs to the carotenoid/retinoid oxidoreductase family. Homotetramer. Requires FAD as cofactor.

The protein localises to the plastid. Its subcellular location is the chloroplast. The protein resides in the chromoplast. It is found in the membrane. It catalyses the reaction 2 a plastoquinone + 15-cis-phytoene = 9,9',15-tri-cis-zeta-carotene + 2 a plastoquinol. The protein operates within carotenoid biosynthesis; lycopene biosynthesis. In terms of biological role, converts phytoene into zeta-carotene via the intermediary of phytofluene by the symmetrical introduction of two double bonds at the C-11 and C-11' positions of phytoene with a concomitant isomerization of two neighboring double bonds at the C9 and C9' positions from trans to cis. In Arabidopsis thaliana (Mouse-ear cress), this protein is 15-cis-phytoene desaturase, chloroplastic/chromoplastic (PDS).